Consider the following 138-residue polypeptide: BPTI/Kunitz domain-containing protein 1 (138 aa).

Residues 1–19 (MYTLYILSLLCAFVTFSEC) form the signal peptide. Positions 72-122 (CTLPRKIGPCRASIPRYYFNFVTKRCELFFWGGCQPNKNNFETIYDCQGYC) constitute a BPTI/Kunitz inhibitor domain. Cystine bridges form between Cys72-Cys122, Cys81-Cys105, and Cys97-Cys118.

Prismatic layer of shell (at protein level). Expressed primarily in the mantle with highest level in the mantle edge and lower level in the mantle pallium.

Its subcellular location is the secreted. This chain is BPTI/Kunitz domain-containing protein 1, found in Pinctada maxima (Silver-lipped pearl oyster).